A 394-amino-acid polypeptide reads, in one-letter code: Methylthioribose kinase (394 aa).

Residues Asn-44, Lys-61, and 115-117 (EDL) each bind ATP. Asp-233 provides a ligand contact to substrate. 250–252 (DPE) is an ATP binding site. Position 337 (Arg-337) interacts with substrate.

This sequence belongs to the methylthioribose kinase family. As to quaternary structure, homodimer.

The catalysed reaction is 5-(methylsulfanyl)-D-ribose + ATP = 5-(methylsulfanyl)-alpha-D-ribose 1-phosphate + ADP + H(+). Its pathway is amino-acid biosynthesis; L-methionine biosynthesis via salvage pathway; S-methyl-5-thio-alpha-D-ribose 1-phosphate from S-methyl-5'-thioadenosine (hydrolase route): step 2/2. Catalyzes the phosphorylation of methylthioribose into methylthioribose-1-phosphate. In Bacillus velezensis (strain DSM 23117 / BGSC 10A6 / LMG 26770 / FZB42) (Bacillus amyloliquefaciens subsp. plantarum), this protein is Methylthioribose kinase.